The chain runs to 355 residues: UDP-N-acetylglucosamine--N-acetylmuramyl-(pentapeptide) pyrophosphoryl-undecaprenol N-acetylglucosamine transferase (355 aa).

Residues threonine 15–glycine 17, asparagine 127, arginine 163, serine 191, isoleucine 244, alanine 263–glutamate 268, and glutamine 288 each bind UDP-N-acetyl-alpha-D-glucosamine.

The protein belongs to the glycosyltransferase 28 family. MurG subfamily.

The protein resides in the cell inner membrane. It catalyses the reaction di-trans,octa-cis-undecaprenyl diphospho-N-acetyl-alpha-D-muramoyl-L-alanyl-D-glutamyl-meso-2,6-diaminopimeloyl-D-alanyl-D-alanine + UDP-N-acetyl-alpha-D-glucosamine = di-trans,octa-cis-undecaprenyl diphospho-[N-acetyl-alpha-D-glucosaminyl-(1-&gt;4)]-N-acetyl-alpha-D-muramoyl-L-alanyl-D-glutamyl-meso-2,6-diaminopimeloyl-D-alanyl-D-alanine + UDP + H(+). Its pathway is cell wall biogenesis; peptidoglycan biosynthesis. In terms of biological role, cell wall formation. Catalyzes the transfer of a GlcNAc subunit on undecaprenyl-pyrophosphoryl-MurNAc-pentapeptide (lipid intermediate I) to form undecaprenyl-pyrophosphoryl-MurNAc-(pentapeptide)GlcNAc (lipid intermediate II). This Shigella flexneri serotype 5b (strain 8401) protein is UDP-N-acetylglucosamine--N-acetylmuramyl-(pentapeptide) pyrophosphoryl-undecaprenol N-acetylglucosamine transferase.